The following is a 231-amino-acid chain: Ion-translocating oxidoreductase complex subunit E (231 aa).

6 consecutive transmembrane segments (helical) span residues 18 to 38, 39 to 59, 63 to 83, 86 to 106, 125 to 145, and 182 to 202; these read ALVQLLGLCPLLAVTSTATNA, LGLGLATTLVLTLTNLTISTL, TPAEIRIPIYVMIIASVVSAV, LINAYAFGLYQSLGIFIPLIV, ALSALDGFSIGMGATCAMFVL, and PFLLAMLPPGAFIGLGLMLAG.

Belongs to the NqrDE/RnfAE family. In terms of assembly, the complex is composed of six subunits: RsxA, RsxB, RsxC, RsxD, RsxE and RsxG.

Its subcellular location is the cell inner membrane. Its function is as follows. Part of a membrane-bound complex that couples electron transfer with translocation of ions across the membrane. Required to maintain the reduced state of SoxR. This is Ion-translocating oxidoreductase complex subunit E from Escherichia coli (strain SE11).